We begin with the raw amino-acid sequence, 295 residues long: MSKSTKLCGKTSCPRSNIFCNLLDKIVKRPSLQFLGQWGYHCYEPRIYRSLAKILRYVDLDGFDALLTDYIAFVEKSGYRFEVSFNLDFTEICVNTILYWVFARKGNPDFVELLLKKTKDYVQDRSCNLALIWRTFTPVYCPSPLSGITPLFYVAQTRQSNIFKILLQYGILEREKNPINIVLTIVLYPSRVRVMVDRELADIHEDAKTCLVLCSRVLSVISVKEIKTQLSLGRHPIISNWFDYIPSTRYKDPCELLHLCRLTIRNQLLTNNMLPDGIFSLLIPARLQNYLNLEI.

The ANK repeat unit spans residues 146-176 (SGITPLFYVAQTRQSNIFKILLQYGILEREK). The 64-residue stretch at 232-295 (LGRHPIISNW…RLQNYLNLEI (64 aa)) folds into the SOCS box domain.

Belongs to the ankyrin SOCS box (ASB) family. In terms of tissue distribution, specifically expressed in testis. Not detected in other tissues tested.

It participates in protein modification; protein ubiquitination. Its function is as follows. May be a substrate-recognition component of a SCF-like ECS (Elongin-Cullin-SOCS-box protein) E3 ubiquitin-protein ligase complex which mediates the ubiquitination and subsequent proteasomal degradation of target proteins. In Homo sapiens (Human), this protein is Ankyrin repeat and SOCS box protein 17 (ASB17).